Here is a 141-residue protein sequence, read N- to C-terminus: Protein E6 (141 aa).

2 zinc fingers span residues 27–64 (CRFC…CSSC) and 101–137 (CKFC…CRHC).

Belongs to the papillomaviridae E6 protein family. As to quaternary structure, forms homodimers. Interacts with ubiquitin-protein ligase UBE3A/E6-AP; this interaction stimulates UBE3A ubiquitin activity. Interacts with host BAK1.

The protein localises to the host cytoplasm. It localises to the host nucleus. In terms of biological role, plays a major role in the induction and maintenance of cellular transformation. E6 associates with host UBE3A/E6-AP ubiquitin-protein ligase and modulates its activity. Protects host keratinocytes from apoptosis by mediating the degradation of host BAK1. May also inhibit host immune response. This Human papillomavirus 15 protein is Protein E6.